The sequence spans 510 residues: NAD(P)H-quinone oxidoreductase subunit 2 A, chloroplastic (510 aa).

The next 14 membrane-spanning stretches (helical) occupy residues 31-51, 57-77, 99-119, 124-144, 149-169, 184-204, 229-249, 261-281, 295-315, 323-343, 354-374, 395-415, 418-438, and 484-504; these read LIFP…IDLT, IPWL…ALLF, IFQF…VEYI, MAIT…MFLC, LITI…LSGY, LLMG…LYGL, ISIA…LAPF, PTPV…ALAT, WHLL…LIAI, MLAY…IVGD, YMLF…LFGL, ALSL…AGFF, LYLF…IGLL, and MIVC…IIAI.

This sequence belongs to the complex I subunit 2 family. In terms of assembly, NDH is composed of at least 16 different subunits, 5 of which are encoded in the nucleus.

It localises to the plastid. Its subcellular location is the chloroplast thylakoid membrane. The catalysed reaction is a plastoquinone + NADH + (n+1) H(+)(in) = a plastoquinol + NAD(+) + n H(+)(out). It catalyses the reaction a plastoquinone + NADPH + (n+1) H(+)(in) = a plastoquinol + NADP(+) + n H(+)(out). Its function is as follows. NDH shuttles electrons from NAD(P)H:plastoquinone, via FMN and iron-sulfur (Fe-S) centers, to quinones in the photosynthetic chain and possibly in a chloroplast respiratory chain. The immediate electron acceptor for the enzyme in this species is believed to be plastoquinone. Couples the redox reaction to proton translocation, and thus conserves the redox energy in a proton gradient. This Nicotiana tabacum (Common tobacco) protein is NAD(P)H-quinone oxidoreductase subunit 2 A, chloroplastic.